Reading from the N-terminus, the 550-residue chain is Arginine--tRNA ligase (550 aa).

Positions 130–140 (ANPTGPIHIGG) match the 'HIGH' region motif.

It belongs to the class-I aminoacyl-tRNA synthetase family. As to quaternary structure, monomer.

The protein resides in the cytoplasm. The catalysed reaction is tRNA(Arg) + L-arginine + ATP = L-arginyl-tRNA(Arg) + AMP + diphosphate. The polypeptide is Arginine--tRNA ligase (argS) (Mycobacterium tuberculosis (strain CDC 1551 / Oshkosh)).